A 78-amino-acid chain; its full sequence is Large ribosomal subunit protein bL28 (78 aa).

It belongs to the bacterial ribosomal protein bL28 family.

The sequence is that of Large ribosomal subunit protein bL28 from Synechococcus sp. (strain CC9605).